Here is a 31-residue protein sequence, read N- to C-terminus: GLDLGLSRGFSGSQAAKHLMGLAAANYAGGP.

Pro31 is modified (proline amide).

This sequence belongs to the diuretic hormone class 2 family.

It localises to the secreted. In terms of biological role, regulation of fluid secretion. Stimulates primary urine secretion by Malpighian tubules and causes a dose-dependent stimulation of cAMP levels in the tubules. Has a nonselective effect on Na(+)/K(+) ion transport. In vitro, primarily elevates intracellular Ca(2+). This Apis mellifera (Honeybee) protein is Diuretic hormone class 2.